Reading from the N-terminus, the 358-residue chain is Peptide chain release factor 1 (358 aa).

N5-methylglutamine is present on Gln-233.

The protein belongs to the prokaryotic/mitochondrial release factor family. Post-translationally, methylated by PrmC. Methylation increases the termination efficiency of RF1.

The protein localises to the cytoplasm. Functionally, peptide chain release factor 1 directs the termination of translation in response to the peptide chain termination codons UAG and UAA. This is Peptide chain release factor 1 from Blochmanniella floridana.